The chain runs to 877 residues: TSET complex member tstB (877 aa).

2 disordered regions span residues 398–437 (HLHH…SGSS) and 522–557 (TGLP…SNSI). Low complexity-rich tracts occupy residues 412 to 437 (GSVP…SGSS) and 529 to 556 (SNNN…SSNS).

In terms of assembly, component of the TSET complex, a heterohexamer composed of tstA, tstB, tstC, tstD, tstE and tstF, which may act in plasma membrane turnover. tstA, tstB, tstC and tstD are likely to be the core complex members with tstE and tstF acting as associated scaffold proteins.

This is TSET complex member tstB from Dictyostelium discoideum (Social amoeba).